An 896-amino-acid polypeptide reads, in one-letter code: Protein translocase subunit SecA (896 aa).

Residues Q87, 105-109, and D512 each bind ATP; that span reads GEGKT. A disordered region spans residues 867-889; sequence QEPARSNRVAGRNDPCPCGSGKK. Zn(2+)-binding residues include C882, C884, C893, and C894.

It belongs to the SecA family. In terms of assembly, monomer and homodimer. Part of the essential Sec protein translocation apparatus which comprises SecA, SecYEG and auxiliary proteins SecDF-YajC and YidC. The cofactor is Zn(2+).

It is found in the cell inner membrane. It localises to the cytoplasm. The catalysed reaction is ATP + H2O + cellular proteinSide 1 = ADP + phosphate + cellular proteinSide 2.. Part of the Sec protein translocase complex. Interacts with the SecYEG preprotein conducting channel. Has a central role in coupling the hydrolysis of ATP to the transfer of proteins into and across the cell membrane, serving as an ATP-driven molecular motor driving the stepwise translocation of polypeptide chains across the membrane. In Pelobacter propionicus (strain DSM 2379 / NBRC 103807 / OttBd1), this protein is Protein translocase subunit SecA.